The following is a 1375-amino-acid chain: MAQANSRSRNSATISYPEKRRARVNLGKREVEILKTPYLLETQIESYRKFLQKDIAAEKREDNGLHAAFKSVFPITSYSGYAVLEYVGYSLGGESTLFDVEECKLRGLTYAAPLKVNMRLVIYDKEAPAGKKAIKDIKEQEVYMGEIPLMTETGSLVINGTERVVVSQLHRSPGVFFEHDKGKTHSSGKLLYSARVIPYRGSWLDFEFDPKDCLFVRIDRRRKLPATVILRALGYDTEQILDMFYKTNHFHLNQETVTLDLIPQRLRGELAVVEIKDKKGKVIVEANRRISARHIRLIEKAEINKLELPDDYLYGKVIGKTIIDKETGEIIAHANEEITAELLKNLRATKTASLDTLYINEIECGLYVSDTLRLDTTTNQLEALVEIYRIMRPGEPPTKEAAESLFENLFFSPERYSLSAVGRMKFNRRVGRKELTGLDVLSKEDIVDVLRVLVDIRDGKGDVDDIDHLGNRRIRSVGEMAENQFRVGLVRVERAVKDRLSLADVENLMPQDLVNAKPVSAAIKEFFGSSQLSQFMDQNNPLSEITHKRRVSALGPGGLTRERAGFEVRDVHVTHYGRVCPIETPEGPNIGLINSLAVFARANEYGFLETPYRKVVDRVVTDETEYLSAIEEGDYYIAQANTNVDEKGRLVDDLISCRYKGEFTLTTPDKINYMDVSPRQIVSVAAALIPFLEHDDANRALMGSNMQRQAVPTIRPETPLVGTGMERTVAVDSGVTVIAKRSGVIDSVDASRIVVRVDRKETEDDDDIGVDIYNLTKFTRSNQNTCINQHPIVEVGDKVQKGDVLADGPSTDIGELALGQNLLVAFMPWNGYNFEDSILISERLVEEDRFTTIHIQEFTCVARDTKLGPEEITSDIPNVGESALAKLDESGIVHIGAEVNAGDILVGKVTPKGETQLTPEEKLLRAIFGEKASDVKDTSLRVTPGITGTVIGVRIFTREGVKKDERTLEIEKAELSKVEKDLNDELRVREDALFENLEKLLTGRVAAGGPNKLAKGTKITKSYLADLPRQKWFEIRLQDDAATKRLEASHEHFKELRETRDAKLKDSRQKLTQGGDLAPGVIKIVKVYLAVKRRIQPGDKMAGRHGNKGVISTIVPIEDMPYLEDGTPVDIVLNPLGVPSRMNIGQVLETHLGWATKGLGKKIGEMIEKGADAKELRKSLKPIYDLSKTQRFDLEALEDPEIVTLAKNLRKGVPISSPVFDGATEEEIKQLLKMADLPTSGQAALYDGRTGKKFDRSVTVGYMYMLKLNHLVDDKMHARSTGSYSLVTQQPLGGKAQFGGQRFGEMEVWALEAYGAAYTLQEMLTVKSDDVAGRTRMYKNIVDGDHRMDAGMPESFNVLVKEIRSLAIDIGLEND.

It belongs to the RNA polymerase beta chain family. In terms of assembly, the RNAP catalytic core consists of 2 alpha, 1 beta, 1 beta' and 1 omega subunit. When a sigma factor is associated with the core the holoenzyme is formed, which can initiate transcription.

It carries out the reaction RNA(n) + a ribonucleoside 5'-triphosphate = RNA(n+1) + diphosphate. DNA-dependent RNA polymerase catalyzes the transcription of DNA into RNA using the four ribonucleoside triphosphates as substrates. This Coxiella burnetii (strain Dugway 5J108-111) protein is DNA-directed RNA polymerase subunit beta.